A 66-amino-acid chain; its full sequence is Small ribosomal subunit protein bS21 (66 aa).

It belongs to the bacterial ribosomal protein bS21 family.

This Persephonella marina (strain DSM 14350 / EX-H1) protein is Small ribosomal subunit protein bS21.